The following is a 181-amino-acid chain: Inner membrane-spanning protein YciB (181 aa).

5 helical membrane-spanning segments follow: residues 22–42 (IYTATGALIIATAIQLVVTYA), 50–70 (MQLITFIMVTVFGGMTIFLHD), 80–100 (IVYCVFAAGLIIAHILGKPVI), 122–142 (WVLFFTVCAIANLYVAFEMPL), and 148–168 (FKVFGLLGLTFLYTLFTGMYV).

Belongs to the YciB family.

Its subcellular location is the cell inner membrane. In terms of biological role, plays a role in cell envelope biogenesis, maintenance of cell envelope integrity and membrane homeostasis. This Aliivibrio fischeri (strain ATCC 700601 / ES114) (Vibrio fischeri) protein is Inner membrane-spanning protein YciB.